A 221-amino-acid chain; its full sequence is Translation initiation factor 6 (221 aa).

Belongs to the eIF-6 family.

Functionally, binds to the 50S ribosomal subunit and prevents its association with the 30S ribosomal subunit to form the 70S initiation complex. This chain is Translation initiation factor 6, found in Methanosphaerula palustris (strain ATCC BAA-1556 / DSM 19958 / E1-9c).